The chain runs to 102 residues: Neuropeptide F (102 aa).

An N-terminal signal peptide occupies residues 1-29; the sequence is MSNTMRCILIVCVALTLIAAGCNVEASNS. Positions 30 to 32 are excised as a propeptide; the sequence is RPP. Phenylalanine amide is present on Phe62. Residues 66 to 102 constitute a propeptide that is removed on maturation; sequence GGPLMEMLRNRELENNMAKSINSGGELIRALDEEEVF.

It belongs to the NPY family.

The protein resides in the secreted. An integral part of the sensory system that mediates food signaling, providing the neural basis for the regulation of food response; coordinates larval foraging and social behavior changes during development. May have a hormonal role in females. The polypeptide is Neuropeptide F (Drosophila pseudoobscura pseudoobscura (Fruit fly)).